The following is a 383-amino-acid chain: ATP phosphoribosyltransferase regulatory subunit (383 aa).

This sequence belongs to the class-II aminoacyl-tRNA synthetase family. HisZ subfamily. In terms of assembly, heteromultimer composed of HisG and HisZ subunits.

It is found in the cytoplasm. It functions in the pathway amino-acid biosynthesis; L-histidine biosynthesis; L-histidine from 5-phospho-alpha-D-ribose 1-diphosphate: step 1/9. Functionally, required for the first step of histidine biosynthesis. May allow the feedback regulation of ATP phosphoribosyltransferase activity by histidine. This chain is ATP phosphoribosyltransferase regulatory subunit, found in Desulfitobacterium hafniense (strain DSM 10664 / DCB-2).